We begin with the raw amino-acid sequence, 113 residues long: uncharacterized protein (113 aa).

Over residues 1 to 19 the composition is skewed to basic and acidic residues; that stretch reads MDKKSAHRNPEDAKAGKYE. The tract at residues 1–94 is disordered; it reads MDKKSAHRNP…NKWRGKRKVS (94 aa). A compositionally biased stretch (basic residues) spans 20 to 41; sequence GKHKRKKKRKQNQNQHRSRHRS. Positions 52-66 are enriched in low complexity; it reads FPSSSSSSSGSQTDS. Over residues 75–92 the composition is skewed to basic residues; that stretch reads KIKKKRREKTNKWRGKRK.

This is an uncharacterized protein from Macaca fascicularis (Crab-eating macaque).